The chain runs to 190 residues: Potassium-transporting ATPase KdpC subunit (190 aa).

A helical membrane pass occupies residues 10–30; sequence TFIFLLLITGGVYPLLTTALG.

The protein belongs to the KdpC family. In terms of assembly, the system is composed of three essential subunits: KdpA, KdpB and KdpC.

It localises to the cell inner membrane. Its function is as follows. Part of the high-affinity ATP-driven potassium transport (or Kdp) system, which catalyzes the hydrolysis of ATP coupled with the electrogenic transport of potassium into the cytoplasm. This subunit acts as a catalytic chaperone that increases the ATP-binding affinity of the ATP-hydrolyzing subunit KdpB by the formation of a transient KdpB/KdpC/ATP ternary complex. In Escherichia coli O157:H7, this protein is Potassium-transporting ATPase KdpC subunit.